Consider the following 242-residue polypeptide: MVQEMLGGTRITYLGHATFRLTTPGGENILIDPFLADNPQTPEELKQVGDLDTILVTHGHFDHFADAIPVARQTGATVVANFEISSYVQSQGIENSMPLNKGGTARVGGVKVTGTNAFHASSIQTEDGSTIYGGEPMGFVVEFESGFKVYHAGDTAVFGDMRLIGELYGPDLALLPIGDRVVMSPFEAAHAARLLGVRHVVPMHYGTFPFLPGTPEEFERHARELGLELEIHVMKPGEELGS.

It belongs to the UPF0173 family.

In Rubrobacter xylanophilus (strain DSM 9941 / JCM 11954 / NBRC 16129 / PRD-1), this protein is UPF0173 metal-dependent hydrolase Rxyl_1261.